Here is a 504-residue protein sequence, read N- to C-terminus: Aspartyl/glutamyl-tRNA(Asn/Gln) amidotransferase subunit B (504 aa).

This sequence belongs to the GatB/GatE family. GatB subfamily. In terms of assembly, heterotrimer of A, B and C subunits.

The enzyme catalyses L-glutamyl-tRNA(Gln) + L-glutamine + ATP + H2O = L-glutaminyl-tRNA(Gln) + L-glutamate + ADP + phosphate + H(+). It carries out the reaction L-aspartyl-tRNA(Asn) + L-glutamine + ATP + H2O = L-asparaginyl-tRNA(Asn) + L-glutamate + ADP + phosphate + 2 H(+). In terms of biological role, allows the formation of correctly charged Asn-tRNA(Asn) or Gln-tRNA(Gln) through the transamidation of misacylated Asp-tRNA(Asn) or Glu-tRNA(Gln) in organisms which lack either or both of asparaginyl-tRNA or glutaminyl-tRNA synthetases. The reaction takes place in the presence of glutamine and ATP through an activated phospho-Asp-tRNA(Asn) or phospho-Glu-tRNA(Gln). In Tropheryma whipplei (strain TW08/27) (Whipple's bacillus), this protein is Aspartyl/glutamyl-tRNA(Asn/Gln) amidotransferase subunit B.